The primary structure comprises 634 residues: DNA-directed RNA polymerase subunit gamma (634 aa).

Zn(2+)-binding residues include C74, C76, C89, and C92. Mg(2+)-binding residues include D471, D473, and D475.

Belongs to the RNA polymerase beta' chain family. RpoC1 subfamily. In cyanobacteria the RNAP catalytic core is composed of 2 alpha, 1 beta, 1 beta', 1 gamma and 1 omega subunit. When a sigma factor is associated with the core the holoenzyme is formed, which can initiate transcription. The cofactor is Mg(2+). Zn(2+) is required as a cofactor.

The enzyme catalyses RNA(n) + a ribonucleoside 5'-triphosphate = RNA(n+1) + diphosphate. DNA-dependent RNA polymerase catalyzes the transcription of DNA into RNA using the four ribonucleoside triphosphates as substrates. The sequence is that of DNA-directed RNA polymerase subunit gamma from Prochlorococcus marinus (strain MIT 9303).